A 142-amino-acid polypeptide reads, in one-letter code: Large ribosomal subunit protein uL13 (142 aa).

It belongs to the universal ribosomal protein uL13 family. Part of the 50S ribosomal subunit.

Functionally, this protein is one of the early assembly proteins of the 50S ribosomal subunit, although it is not seen to bind rRNA by itself. It is important during the early stages of 50S assembly. The polypeptide is Large ribosomal subunit protein uL13 (Pseudomonas syringae pv. syringae (strain B728a)).